We begin with the raw amino-acid sequence, 311 residues long: Syntaxin-111 (311 aa).

The Cytoplasmic segment spans residues 1-284 (MNDLMTKSFM…AREHQRSSRK (284 aa)). Residues 213–275 (VHEIQDRHDA…QGGNKELRKA (63 aa)) form the t-SNARE coiled-coil homology domain. A helical; Anchor for type IV membrane protein membrane pass occupies residues 285–305 (WLCIGIIILLLLVLLVIVPIA). Over 306 to 311 (TSFKRS) the chain is Vesicular.

This sequence belongs to the syntaxin family. Expressed in roots and panicles.

It localises to the cell membrane. The protein localises to the cytoplasm. Functionally, vesicle trafficking protein that functions in the secretory pathway. The polypeptide is Syntaxin-111 (Oryza sativa subsp. japonica (Rice)).